A 325-amino-acid chain; its full sequence is Gamma-hemolysin component B (325 aa).

The N-terminal stretch at 1 to 26 (MKMNKLVKSSVATSMALLLLSGTANA) is a signal peptide.

It belongs to the aerolysin family. In terms of assembly, toxicity requires sequential binding and synergistic association of a class S and a class F component which form heterooligomeric complexes. HlgB (class F) associates with either hlgA thus forming an AB toxin or with hlgC thus forming a CB toxin. Interacts with host AMFR.

It is found in the secreted. Toxin that seems to act by forming pores in the membrane of the cell. Has a hemolytic and a leucotoxic activity. Promotes host AMFR-mediated inflammation by mediating 'Lys-27'-linked ubiquitination of TAB3, TAK1-TAB3 complex formation and phosphorylation of TAK1/MAP3K7. In turn, activates host NF-kappa-B signaling pathway. The chain is Gamma-hemolysin component B (hlgB) from Staphylococcus aureus (strain NCTC 8325 / PS 47).